The primary structure comprises 863 residues: Leucine--tRNA ligase (863 aa).

The 'HIGH' region motif lies at 42–52 (PYPSGKLHMGH). The 'KMSKS' region signature appears at 623–627 (KMSKS). Lys-626 is a binding site for ATP.

The protein belongs to the class-I aminoacyl-tRNA synthetase family.

The protein resides in the cytoplasm. It carries out the reaction tRNA(Leu) + L-leucine + ATP = L-leucyl-tRNA(Leu) + AMP + diphosphate. The chain is Leucine--tRNA ligase from Paraburkholderia xenovorans (strain LB400).